The following is a 138-amino-acid chain: L-ectoine synthase (138 aa).

Belongs to the ectoine synthase family.

It carries out the reaction (2S)-4-acetamido-2-aminobutanoate = L-ectoine + H2O. It participates in amine and polyamine biosynthesis; ectoine biosynthesis; L-ectoine from L-aspartate 4-semialdehyde: step 3/3. Its function is as follows. Catalyzes the circularization of gamma-N-acetyl-alpha,gamma-diaminobutyric acid (ADABA) to ectoine (1,4,5,6-tetrahydro-2-methyl-4-pyrimidine carboxylic acid), which is an excellent osmoprotectant. The polypeptide is L-ectoine synthase (Vibrio cholerae serotype O1 (strain ATCC 39541 / Classical Ogawa 395 / O395)).